We begin with the raw amino-acid sequence, 168 residues long: Small ribosomal subunit protein bS16 (168 aa).

The segment at Leu110–Ala168 is disordered. The segment covering Ala129–Ala144 has biased composition (basic and acidic residues). Acidic residues predominate over residues Glu153 to Ala168.

Belongs to the bacterial ribosomal protein bS16 family.

The chain is Small ribosomal subunit protein bS16 from Corynebacterium efficiens (strain DSM 44549 / YS-314 / AJ 12310 / JCM 11189 / NBRC 100395).